A 530-amino-acid polypeptide reads, in one-letter code: Ubiquitin carboxyl-terminal hydrolase 17-like protein 22 (530 aa).

Residues 80–375 (AGLQNMGNTC…QAYVLFYIQK (296 aa)) enclose the USP domain. The Nucleophile role is filled by C89. Residue H334 is the Proton acceptor of the active site. Basic and acidic residues-rich tracts occupy residues 382–392 (SESVSRGREPR) and 398–412 (DTDR…KRDH). 2 disordered regions span residues 382–412 (SESV…KRDH) and 476–530 (KNHH…LVCQ). Residues 484 to 495 (SSLLKLSSTTPT) are compositionally biased toward low complexity. Over residues 496–505 (HQESMNTGTL) the composition is skewed to polar residues. Positions 510-524 (GRARRSKGKNKHSKR) are enriched in basic residues.

It belongs to the peptidase C19 family. USP17 subfamily.

It localises to the nucleus. The protein localises to the endoplasmic reticulum. It carries out the reaction Thiol-dependent hydrolysis of ester, thioester, amide, peptide and isopeptide bonds formed by the C-terminal Gly of ubiquitin (a 76-residue protein attached to proteins as an intracellular targeting signal).. Its function is as follows. Deubiquitinating enzyme that removes conjugated ubiquitin from specific proteins to regulate different cellular processes that may include cell proliferation, progression through the cell cycle, apoptosis, cell migration, and the cellular response to viral infection. In Homo sapiens (Human), this protein is Ubiquitin carboxyl-terminal hydrolase 17-like protein 22 (USP17L22).